The primary structure comprises 192 residues: uncharacterized protein (192 aa).

Positions 29-160 constitute a Nudix hydrolase domain; that stretch reads RRQAAVLIPV…PLDIYRRGDS (132 aa). The Nudix box signature appears at 67–89; the sequence is GAVDSSDASLIAAALREAQEEVA. Mg(2+)-binding residues include Glu-83 and Glu-87.

It belongs to the Nudix hydrolase family. PCD1 subfamily. Mn(2+) serves as cofactor. Mg(2+) is required as a cofactor.

Probably mediates the hydrolysis of some nucleoside diphosphate derivatives. This is an uncharacterized protein from Citrobacter koseri (strain ATCC BAA-895 / CDC 4225-83 / SGSC4696).